The following is a 458-amino-acid chain: Flavonol 3-O-glucosyltransferase UGT76E12 (458 aa).

The active-site Proton acceptor is the H25. H25 serves as a coordination point for an anthocyanidin. Residue D118 is the Charge relay of the active site. UDP-alpha-D-glucose is bound by residues T140, A339, Q341, H356, W359, N360, S361, and E364. An an anthocyanidin-binding site is contributed by G379. UDP-alpha-D-glucose is bound by residues D380 and Q381.

The protein belongs to the UDP-glycosyltransferase family.

It carries out the reaction a flavonol + UDP-alpha-D-glucose = a flavonol 3-O-beta-D-glucoside + UDP + H(+). The catalysed reaction is a 7-O-hydroxy-flavonol + UDP-alpha-D-glucose = a flavonol 7-O-beta-D-glucoside + UDP + H(+). In terms of biological role, possesses quercetin 3-O-glucosyltransferase and 7-O-glucosyltransferase activities in vitro. This chain is Flavonol 3-O-glucosyltransferase UGT76E12, found in Arabidopsis thaliana (Mouse-ear cress).